Here is a 225-residue protein sequence, read N- to C-terminus: Membrane protein (225 aa).

Topologically, residues 1–20 are virion surface; it reads MPNETNCTLDFEQSVQLFKE. Residues 21–41 form a helical membrane-spanning segment; that stretch reads YNLFITAFLLFLTIILQYGYA. The Intravirion portion of the chain corresponds to 42 to 51; sequence TRTKVIYTLK. The chain crosses the membrane as a helical span at residues 52–72; the sequence is MIVLWCFWPLNIAVGVISCTY. Topologically, residues 73–77 are virion surface; sequence PPNTG. The helical transmembrane segment at 78-98 threads the bilayer; it reads GLVVAIILTVFACLSFVGYWI. The Intravirion portion of the chain corresponds to 99–225; that stretch reads QSIRLFKRCR…VATGGSSLYT (127 aa).

It belongs to the gammacoronaviruses M protein family. Homomultimer. Interacts with envelope E protein in the budding compartment of the host cell, which is located between endoplasmic reticulum and the Golgi complex. Forms a complex with HE and S proteins. Interacts with nucleocapsid N protein. This interaction probably participates in RNA packaging into the virus.

Its subcellular location is the virion membrane. It localises to the host Golgi apparatus membrane. Functionally, component of the viral envelope that plays a central role in virus morphogenesis and assembly via its interactions with other viral proteins. The sequence is that of Membrane protein from Avian infectious bronchitis virus (strain Beaudette US) (IBV).